A 354-amino-acid chain; its full sequence is Neuronal growth regulator 1 (354 aa).

An N-terminal signal peptide occupies residues 1–37 (MDMMLLVQGACCSNQWLAAVLLSLCCLLPSCLPAGQS). Ig-like C2-type domains lie at 38-134 (VDFP…VHLT), 139-221 (PKIY…KVVV), and 225-313 (PTIQ…LPLN). A disulfide bridge connects residues Cys-60 and Cys-118. Asn-73 and Asn-155 each carry an N-linked (GlcNAc...) asparagine glycan. Cystine bridges form between Cys-160-Cys-203 and Cys-245-Cys-297. Tyr-187 is modified (phosphotyrosine). N-linked (GlcNAc...) asparagine glycans are attached at residues Asn-275, Asn-286, Asn-294, and Asn-307. The GPI-anchor amidated glycine moiety is linked to residue Gly-324. The propeptide at 325 to 354 (SADVLFSCWYLVLTLSSFTSIFYLKNAILQ) is removed in mature form.

It belongs to the immunoglobulin superfamily. IgLON family.

It is found in the cell membrane. Functionally, may be involved in cell-adhesion. May function as a trans-neural growth-promoting factor in regenerative axon sprouting in the mammalian brain. This Pongo abelii (Sumatran orangutan) protein is Neuronal growth regulator 1 (NEGR1).